The chain runs to 254 residues: Zinc import ATP-binding protein ZnuC (254 aa).

The 217-residue stretch at 5–221 (ICAADLSVSH…PAYRALFGSE (217 aa)) folds into the ABC transporter domain. An ATP-binding site is contributed by 38 to 45 (GPNGSGKS). A compositionally biased stretch (basic and acidic residues) spans 234 to 245 (DHDHDHVAEGHR). Residues 234 to 254 (DHDHDHVAEGHRHGPACAHPH) are disordered.

Belongs to the ABC transporter superfamily. Zinc importer (TC 3.A.1.15.5) family. As to quaternary structure, the complex is composed of two ATP-binding proteins (ZnuC), two transmembrane proteins (ZnuB) and a solute-binding protein (ZnuA).

It localises to the cell inner membrane. It carries out the reaction Zn(2+)(out) + ATP(in) + H2O(in) = Zn(2+)(in) + ADP(in) + phosphate(in) + H(+)(in). Functionally, part of the ABC transporter complex ZnuABC involved in zinc import. Responsible for energy coupling to the transport system. The protein is Zinc import ATP-binding protein ZnuC of Paracoccus denitrificans (strain Pd 1222).